The following is a 382-amino-acid chain: Protein phosphatase 1A (382 aa).

Residue Gly2 is the site of N-myristoyl glycine attachment. A PPM-type phosphatase domain is found at 23–291 (RYGLSSMQGW…DNMSVILICF (269 aa)). Positions 60, 61, 239, and 282 each coordinate Mn(2+). A phosphoserine mark is found at Ser375 and Ser377.

This sequence belongs to the PP2C family. In terms of assembly, monomer. Interacts with SMAD2; the interaction dephosphorylates SMAD2 in its C-terminal SXS motif resulting in disruption of the SMAD2/SMAD4 complex, SMAD2 nuclear export and termination of the TGF-beta-mediated signaling. Interacts with SMAD2; the interaction dephosphorylates SMAD2 in its C-terminal SXS motif resulting in disruption of the SMAD2/SMAD4 complex, SMAD2 nuclear export and termination of the TGF-beta-mediated signaling. Interacts with the phosphorylated form of IKBKB/IKKB. Mg(2+) is required as a cofactor. Mn(2+) serves as cofactor. In terms of processing, N-myristoylation is essential for the recognition of its substrates for dephosphorylation.

It is found in the nucleus. It localises to the cytoplasm. Its subcellular location is the cytosol. The protein localises to the membrane. It catalyses the reaction O-phospho-L-seryl-[protein] + H2O = L-seryl-[protein] + phosphate. The catalysed reaction is O-phospho-L-threonyl-[protein] + H2O = L-threonyl-[protein] + phosphate. In terms of biological role, enzyme with a broad specificity. Negatively regulates TGF-beta signaling through dephosphorylating SMAD2 and SMAD3, resulting in their dissociation from SMAD4, nuclear export of the SMADs and termination of the TGF-beta-mediated signaling. Dephosphorylates PRKAA1 and PRKAA2. Plays an important role in the termination of TNF-alpha-mediated NF-kappa-B activation through dephosphorylating and inactivating IKBKB/IKKB. This is Protein phosphatase 1A (Ppm1a) from Mus musculus (Mouse).